Here is a 317-residue protein sequence, read N- to C-terminus: Methionyl-tRNA formyltransferase (317 aa).

109–112 is a (6S)-5,6,7,8-tetrahydrofolate binding site; sequence SLLP.

It belongs to the Fmt family.

The catalysed reaction is L-methionyl-tRNA(fMet) + (6R)-10-formyltetrahydrofolate = N-formyl-L-methionyl-tRNA(fMet) + (6S)-5,6,7,8-tetrahydrofolate + H(+). Functionally, attaches a formyl group to the free amino group of methionyl-tRNA(fMet). The formyl group appears to play a dual role in the initiator identity of N-formylmethionyl-tRNA by promoting its recognition by IF2 and preventing the misappropriation of this tRNA by the elongation apparatus. The protein is Methionyl-tRNA formyltransferase of Halalkalibacterium halodurans (strain ATCC BAA-125 / DSM 18197 / FERM 7344 / JCM 9153 / C-125) (Bacillus halodurans).